The following is a 293-amino-acid chain: Serine/threonine-protein phosphatase 2A catalytic subunit beta isoform (293 aa).

Positions 41, 43, 69, and 101 each coordinate Mn(2+). The active-site Proton donor is His-102. His-151 and His-225 together coordinate Mn(2+). Tyr-291 is subject to Phosphotyrosine. The residue at position 293 (Leu-293) is a Leucine methyl ester.

It belongs to the PPP phosphatase family. PP-1 subfamily. In terms of assembly, found in a complex with at least ARL2, PPP2CB, PPP2R1A, PPP2R2A, PPP2R5E and TBCD. Interacts with TBCD. PP2A consists of a common heterodimeric core enzyme (composed of a 36 kDa catalytic subunit (subunit C) and a 65 kDa constant regulatory subunit (PR65) (subunit A)) that associates with a variety of regulatory subunits. Proteins that associate with the core dimer include three families of regulatory subunits B (the R2/B/PR55/B55, R3/B''/PR72/PR130/PR59 and R5/B'/B56 families), the 48 kDa variable regulatory subunit, viral proteins, and cell signaling molecules. Binds PPME1. May indirectly interact with SGO1, most probably through regulatory B56 subunits. Interacts with CTTNBP2NL. Interacts with PTPA. Part of the core of STRIPAK complexes composed of PP2A catalytic and scaffolding subunits, the striatins (PP2A regulatory subunits), the striatin-associated proteins MOB4, STRIP1 and STRIP2, PDCD10 and members of the STE20 kinases, such as STK24 and STK26. Requires Mn(2+) as cofactor. Reversibly methyl esterified on Leu-293 by leucine carboxyl methyltransferase 1 (Lcmt1) and protein phosphatase methylesterase 1 (PPME1). Carboxyl methylation influences the affinity of the catalytic subunit for the different regulatory subunits, thereby modulating the PP2A holoenzyme's substrate specificity, enzyme activity and cellular localization. In terms of processing, phosphorylation of either threonine (by autophosphorylation-activated protein kinase) or tyrosine results in inactivation of the phosphatase. Auto-dephosphorylation has been suggested as a mechanism for reactivation. Post-translationally, may be monoubiquitinated by NOSIP.

The protein localises to the cytoplasm. Its subcellular location is the nucleus. The protein resides in the chromosome. It is found in the centromere. It localises to the cytoskeleton. The protein localises to the spindle pole. It catalyses the reaction O-phospho-L-seryl-[protein] + H2O = L-seryl-[protein] + phosphate. It carries out the reaction O-phospho-L-threonyl-[protein] + H2O = L-threonyl-[protein] + phosphate. Its function is as follows. Catalytic subunit of protein phosphatase 2A (PP2A), a serine/threonine phosphatase involved in the regulation of a wide variety of enzymes, signal transduction pathways, and cellular events. PP2A can modulate the activity of phosphorylase B kinase, casein kinase 2, mitogen-stimulated S6 kinase, and MAP-2 kinase. Part of the striatin-interacting phosphatase and kinase (STRIPAK) complexes. STRIPAK complexes have critical roles in protein (de)phosphorylation and are regulators of multiple signaling pathways including Hippo, MAPK, nuclear receptor and cytoskeleton remodeling. Different types of STRIPAK complexes are involved in a variety of biological processes such as cell growth, differentiation, apoptosis, metabolism and immune regulation. In Sus scrofa (Pig), this protein is Serine/threonine-protein phosphatase 2A catalytic subunit beta isoform (PPP2CB).